Reading from the N-terminus, the 169-residue chain is Probable NADH dehydrogenase [ubiquinone] 1 alpha subcomplex subunit 5, mitochondrial (169 aa).

A mitochondrion-targeting transit peptide spans 1–11 (MFLRAIGRPLL).

Belongs to the complex I NDUFA5 subunit family. As to quaternary structure, complex I is composed of at least 49 different subunits.

The protein resides in the mitochondrion inner membrane. In terms of biological role, accessory subunit of the mitochondrial membrane respiratory chain NADH dehydrogenase (Complex I), that is believed not to be involved in catalysis. Complex I functions in the transfer of electrons from NADH to the respiratory chain. The immediate electron acceptor for the enzyme is believed to be ubiquinone. The sequence is that of Probable NADH dehydrogenase [ubiquinone] 1 alpha subcomplex subunit 5, mitochondrial from Arabidopsis thaliana (Mouse-ear cress).